We begin with the raw amino-acid sequence, 446 residues long: Bifunctional protein GlmU (446 aa).

The pyrophosphorylase stretch occupies residues 1–229 (MTEKPVALIV…EAETLGINTR (229 aa)). UDP-N-acetyl-alpha-D-glucosamine-binding positions include 11-14 (LAAG), K25, Q78, 83-84 (GT), 106-108 (YGD), G141, E155, N170, and N227. D108 serves as a coordination point for Mg(2+). N227 contacts Mg(2+). Residues 230 to 250 (AELAAAEAAFQVRARARALED) form a linker region. An N-acetyltransferase region spans residues 251–446 (GVTMTDPATV…MQALRQKKGN (196 aa)). Positions 316 and 334 each coordinate UDP-N-acetyl-alpha-D-glucosamine. H346 serves as the catalytic Proton acceptor. Y349 and N360 together coordinate UDP-N-acetyl-alpha-D-glucosamine. Acetyl-CoA-binding positions include A363, 369 to 370 (NY), S388, S406, and R423.

It in the N-terminal section; belongs to the N-acetylglucosamine-1-phosphate uridyltransferase family. The protein in the C-terminal section; belongs to the transferase hexapeptide repeat family. Homotrimer. Mg(2+) is required as a cofactor.

The protein localises to the cytoplasm. The enzyme catalyses alpha-D-glucosamine 1-phosphate + acetyl-CoA = N-acetyl-alpha-D-glucosamine 1-phosphate + CoA + H(+). It catalyses the reaction N-acetyl-alpha-D-glucosamine 1-phosphate + UTP + H(+) = UDP-N-acetyl-alpha-D-glucosamine + diphosphate. Its pathway is nucleotide-sugar biosynthesis; UDP-N-acetyl-alpha-D-glucosamine biosynthesis; N-acetyl-alpha-D-glucosamine 1-phosphate from alpha-D-glucosamine 6-phosphate (route II): step 2/2. It participates in nucleotide-sugar biosynthesis; UDP-N-acetyl-alpha-D-glucosamine biosynthesis; UDP-N-acetyl-alpha-D-glucosamine from N-acetyl-alpha-D-glucosamine 1-phosphate: step 1/1. It functions in the pathway bacterial outer membrane biogenesis; LPS lipid A biosynthesis. Catalyzes the last two sequential reactions in the de novo biosynthetic pathway for UDP-N-acetylglucosamine (UDP-GlcNAc). The C-terminal domain catalyzes the transfer of acetyl group from acetyl coenzyme A to glucosamine-1-phosphate (GlcN-1-P) to produce N-acetylglucosamine-1-phosphate (GlcNAc-1-P), which is converted into UDP-GlcNAc by the transfer of uridine 5-monophosphate (from uridine 5-triphosphate), a reaction catalyzed by the N-terminal domain. In Paracoccus denitrificans (strain Pd 1222), this protein is Bifunctional protein GlmU.